We begin with the raw amino-acid sequence, 103 residues long: UPF0145 protein PBPRB0184 (103 aa).

This sequence belongs to the UPF0145 family.

The sequence is that of UPF0145 protein PBPRB0184 from Photobacterium profundum (strain SS9).